Here is a 657-residue protein sequence, read N- to C-terminus: tRNA 5-methylaminomethyl-2-thiouridine biosynthesis bifunctional protein MnmC (657 aa).

The segment at 1–236 (MPDRLVPATL…KRAMLVGEYA (236 aa)) is tRNA (mnm(5)s(2)U34)-methyltransferase. The tract at residues 261–657 (IGAGVAGCAV…LRARQVSAAD (397 aa)) is FAD-dependent cmnm(5)s(2)U34 oxidoreductase.

In the N-terminal section; belongs to the methyltransferase superfamily. tRNA (mnm(5)s(2)U34)-methyltransferase family. This sequence in the C-terminal section; belongs to the DAO family. Requires FAD as cofactor.

It is found in the cytoplasm. The catalysed reaction is 5-aminomethyl-2-thiouridine(34) in tRNA + S-adenosyl-L-methionine = 5-methylaminomethyl-2-thiouridine(34) in tRNA + S-adenosyl-L-homocysteine + H(+). Its function is as follows. Catalyzes the last two steps in the biosynthesis of 5-methylaminomethyl-2-thiouridine (mnm(5)s(2)U) at the wobble position (U34) in tRNA. Catalyzes the FAD-dependent demodification of cmnm(5)s(2)U34 to nm(5)s(2)U34, followed by the transfer of a methyl group from S-adenosyl-L-methionine to nm(5)s(2)U34, to form mnm(5)s(2)U34. The polypeptide is tRNA 5-methylaminomethyl-2-thiouridine biosynthesis bifunctional protein MnmC (Burkholderia multivorans (strain ATCC 17616 / 249)).